The following is a 76-amino-acid chain: Small ribosomal subunit protein bS18 (76 aa).

The protein belongs to the bacterial ribosomal protein bS18 family. Part of the 30S ribosomal subunit. Forms a tight heterodimer with protein bS6.

Functionally, binds as a heterodimer with protein bS6 to the central domain of the 16S rRNA, where it helps stabilize the platform of the 30S subunit. In Xylella fastidiosa (strain 9a5c), this protein is Small ribosomal subunit protein bS18.